The sequence spans 367 residues: Probable trehalose-phosphate phosphatase 4 (367 aa).

This sequence belongs to the trehalose phosphatase family. It depends on a divalent metal cation as a cofactor.

It catalyses the reaction alpha,alpha-trehalose 6-phosphate + H2O = alpha,alpha-trehalose + phosphate. The protein operates within glycan biosynthesis; trehalose biosynthesis. Removes the phosphate from trehalose 6-phosphate to produce free trehalose. Trehalose accumulation in plant may improve abiotic stress tolerance. The chain is Probable trehalose-phosphate phosphatase 4 (TPP4) from Oryza sativa subsp. japonica (Rice).